The primary structure comprises 427 residues: Putative FBD-associated F-box protein At3g50710 (427 aa).

Residues 1 to 53 (MDRISNLSDDLLLKIVSSLPTKDVVVTMLLSKRWKFLWMMVPKLRFDDEFELE) form the F-box domain. Residues 345–395 (HWEEPSSVPQCLLFHLNIFEWKYYNAGDEEKKVVAYILKNARQLKTATFSA) form the FBD domain.

In Arabidopsis thaliana (Mouse-ear cress), this protein is Putative FBD-associated F-box protein At3g50710.